The primary structure comprises 957 residues: Collagen alpha-1(XXI) chain (957 aa).

The signal sequence occupies residues 1 to 16 (MPGIIYILCSILLIES). The VWFA domain maps to 37–211 (DLVFILDGSW…RIREIMKQKL (175 aa)). In terms of domain architecture, Laminin G-like spans 230-412 (GFDILLGLGI…LQKLRIYCDP (183 aa)). 2 disordered regions span residues 441–788 (PAPC…GKEQ) and 820–935 (CKTQ…DAGI). Collagen-like domains follow at residues 448 to 501 (PGEK…PRGF), 502 to 543 (AGLK…DKGD), 544 to 591 (IGID…EEGK), 592 to 642 (PGPP…ISGP), 643 to 684 (EGIS…IPGQ), 685 to 741 (QGYT…EIGE), 742 to 786 (HGHR…QQGK), and 825 to 882 (GSPG…GNKG). The span at 483-498 (TSGSPGIPGSPGVQGP) shows a compositional bias: low complexity. The span at 535–556 (MGPKGDKGDIGIDGKKGTKGDK) shows a compositional bias: basic and acidic residues. 2 stretches are compositionally biased toward low complexity: residues 597 to 616 (MEGL…DGAN) and 633 to 649 (PTGT…SGPQ). A compositionally biased stretch (basic and acidic residues) spans 733–744 (KGEKGEIGEHGH). The segment covering 775–786 (QGLPGPKGQQGK) has biased composition (low complexity).

This sequence belongs to the fibril-associated collagens with interrupted helices (FACIT) family.

Its subcellular location is the secreted. It is found in the extracellular space. It localises to the extracellular matrix. The protein resides in the cytoplasm. The chain is Collagen alpha-1(XXI) chain (col21a1) from Xenopus laevis (African clawed frog).